The chain runs to 574 residues: E3 ubiquitin-protein ligase NEURL1 (574 aa).

Positions 1 to 18 (MGNNFSSVSSLQRGNPSR) are enriched in polar residues. Residues 1-53 (MGNNFSSVSSLQRGNPSRASRGHPQNLKDSIGGSFPVPSHRCHHKQKHCPPTL) are disordered. Glycine 2 is lipidated: N-myristoyl glycine. NHR domains follow at residues 61–217 (TPLL…QLLD) and 292–447 (GDLR…RILG). The RING-type zinc-finger motif lies at 520 to 560 (ECTICYEHAVDTVIYTCGHMCLCYSCGLRLKKALHACCPIC).

As to quaternary structure, interacts with CPEB3 (via N-terminal domain); the interaction increases CPEB3 ubiquitination. Interacts with DLL1. In terms of processing, myristoylation is a determinant of membrane targeting. Expressed in CA1 pyramidal neurons (at protein level). Expressed throughout the adult forebrain, including the cerebral cortex, amygdala, striatum, and CA1 area of the hippocampus. Expressed in sensory neurons of the olfactory epithelium, the vomeronasal organ, mammary gland and skeletal muscle.

The protein resides in the cytoplasm. The protein localises to the perinuclear region. It is found in the cell membrane. Its subcellular location is the perikaryon. It localises to the cell projection. The protein resides in the dendrite. The protein localises to the postsynaptic density. It catalyses the reaction S-ubiquitinyl-[E2 ubiquitin-conjugating enzyme]-L-cysteine + [acceptor protein]-L-lysine = [E2 ubiquitin-conjugating enzyme]-L-cysteine + N(6)-ubiquitinyl-[acceptor protein]-L-lysine.. It functions in the pathway protein modification; protein ubiquitination. Its function is as follows. Plays a role in hippocampal-dependent synaptic plasticity, learning and memory. Involved in the formation of spines and functional synaptic contacts by modulating the translational activity of the cytoplasmic polyadenylation element-binding protein CPEB3. Promotes ubiquitination of CPEB3, and hence induces CPEB3-dependent mRNA translation activation of glutamate receptor GRIA1 and GRIA2. Can function as an E3 ubiquitin-protein ligase to activate monoubiquitination of JAG1 (in vitro), thereby regulating the Notch pathway. Acts as a tumor suppressor; inhibits malignant cell transformation of medulloblastoma (MB) cells by inhibiting the Notch signaling pathway. The polypeptide is E3 ubiquitin-protein ligase NEURL1 (Neurl1) (Mus musculus (Mouse)).